Here is a 392-residue protein sequence, read N- to C-terminus: Aminomethyltransferase, mitochondrial (392 aa).

The N-terminal 16 residues, 1-16 (MLRAGCRAALARRHLS), are a transit peptide targeting the mitochondrion. The substrate site is built by glutamate 221, arginine 250, and tyrosine 388.

Belongs to the GcvT family. In terms of assembly, the glycine cleavage system is composed of four proteins: P, T, L and H.

It is found in the mitochondrion. It catalyses the reaction N(6)-[(R)-S(8)-aminomethyldihydrolipoyl]-L-lysyl-[protein] + (6S)-5,6,7,8-tetrahydrofolate = N(6)-[(R)-dihydrolipoyl]-L-lysyl-[protein] + (6R)-5,10-methylene-5,6,7,8-tetrahydrofolate + NH4(+). Its function is as follows. The glycine cleavage system catalyzes the degradation of glycine. The chain is Aminomethyltransferase, mitochondrial from Gallus gallus (Chicken).